The following is a 284-amino-acid chain: Putative ABC transporter ATP-binding protein SCO5958 (284 aa).

The ABC transporter domain maps to 15-250 (VALRGAAFAY…DLLRRAGLRL (236 aa)). ATP is bound at residue 48–55 (GRNGSGKT).

It belongs to the ABC transporter superfamily.

Its subcellular location is the cell membrane. Its function is as follows. Probably part of an ABC transporter complex. Responsible for energy coupling to the transport system. This Streptomyces coelicolor (strain ATCC BAA-471 / A3(2) / M145) protein is Putative ABC transporter ATP-binding protein SCO5958.